Here is a 1240-residue protein sequence, read N- to C-terminus: Serine/threonine-protein kinase TAO2 (1240 aa).

Phosphoserine is present on Ser-9. One can recognise a Protein kinase domain in the interval Phe-28–Val-281. ATP is bound by residues Ile-34–Val-42 and Lys-57. The active-site Proton acceptor is the Asp-151. Residue Ser-181 is modified to Phosphoserine. Residues Ala-320 to Arg-463 are disordered. Residues Ser-356–Ala-380 show a composition bias toward low complexity. Acidic residues predominate over residues Ser-381–Gly-401. Residues Pro-402–Val-417 show a composition bias toward basic and acidic residues. Ser-422 is modified (phosphoserine). 2 coiled-coil regions span residues Ser-493–Ser-528 and Lys-581–Asn-608. Ser-663 carries the post-translational modification Phosphoserine. Residues Leu-688–Glu-720 adopt a coiled-coil conformation. Residues Ser-782, Ser-830, and Ser-832 each carry the phosphoserine modification. The stretch at Arg-805–Pro-934 forms a coiled coil. Residues Val-899–Pro-946 form a disordered region. Acidic residues predominate over residues Pro-904 to Gly-914. A compositionally biased stretch (pro residues) spans Pro-931–Ser-940. Transmembrane regions (helical) follow at residues Leu-972 to Leu-992, Ala-994 to Cys-1014, Leu-1019 to Leu-1039, Leu-1045 to Leu-1065, and Leu-1175 to Gly-1195. An Omega-N-methylarginine modification is found at Leu-999. Leu-1037 is subject to Phosphoserine. The disordered stretch occupies residues Leu-1212 to Arg-1240.

This sequence belongs to the protein kinase superfamily. STE Ser/Thr protein kinase family. STE20 subfamily. In terms of assembly, interacts with MAP2K3 and MAP2K6. Self-associates. Interacts with tubulins. Interacts with MAP3K7 and interferes with MAP3K7-binding to CHUK and thus prevents NF-kappa-B activation. Isoform 2 interacts with PCDH8; this complex may also include CDH2. Mg(2+) serves as cofactor. Post-translationally, autophosphorylated. Phosphorylated by ATM. In terms of processing, phosphorylated on Ser-1037 by MAPK14. This phosphorylation is required PCDH8 for endocytosis.

Its subcellular location is the cytoplasmic vesicle membrane. The protein resides in the cytoplasm. The protein localises to the cytoskeleton. It is found in the cell projection. It localises to the dendrite. The catalysed reaction is L-seryl-[protein] + ATP = O-phospho-L-seryl-[protein] + ADP + H(+). The enzyme catalyses L-threonyl-[protein] + ATP = O-phospho-L-threonyl-[protein] + ADP + H(+). Serine/threonine-protein kinase involved in different processes such as membrane blebbing and apoptotic bodies formation DNA damage response and MAPK14/p38 MAPK stress-activated MAPK cascade. Phosphorylates itself, MBP, activated MAPK8, MAP2K3, MAP2K6 and tubulins. Activates the MAPK14/p38 MAPK signaling pathway through the specific activation and phosphorylation of the upstream MAP2K3 and MAP2K6 kinases. In response to DNA damage, involved in the G2/M transition DNA damage checkpoint by activating the p38/MAPK14 stress-activated MAPK cascade, probably by mediating phosphorylation of upstream MAP2K3 and MAP2K6 kinases. May affect microtubule organization and stability. May play a role in the osmotic stress-MAPK8 pathway. Prevents MAP3K7-mediated activation of CHUK, and thus NF-kappa-B activation. Isoform 2, but not isoform 1, is required for PCDH8 endocytosis. Following homophilic interactions between PCDH8 extracellular domains, isoform 2 phosphorylates and activates MAPK14/p38 MAPK which in turn phosphorylates isoform 2. This process leads to PCDH8 endocytosis and CDH2 cointernalization. Both isoforms are involved in MAPK14/p38 MAPK activation. The chain is Serine/threonine-protein kinase TAO2 (Taok2) from Mus musculus (Mouse).